The following is a 387-amino-acid chain: Gamma-butyrobetaine dioxygenase (387 aa).

Residues Cys38, Cys40, Cys43, and His82 each contribute to the Zn(2+) site. Fe cation is bound by residues His202, Asp204, and His347. Ser351 is subject to Phosphoserine.

The protein belongs to the gamma-BBH/TMLD family. Fe(2+) is required as a cofactor. It depends on L-ascorbate as a cofactor. Expressed in the liver and in some extend in the testis and the epididymis.

It localises to the cytoplasm. It carries out the reaction 4-(trimethylamino)butanoate + 2-oxoglutarate + O2 = carnitine + succinate + CO2. The protein operates within amine and polyamine biosynthesis; carnitine biosynthesis. Functionally, catalyzes the formation of L-carnitine from gamma-butyrobetaine. This Rattus norvegicus (Rat) protein is Gamma-butyrobetaine dioxygenase (Bbox1).